Consider the following 361-residue polypeptide: Polyribonucleotide 5'-hydroxyl-kinase PH0197 (361 aa).

43 to 50 is a binding site for ATP; the sequence is GDVDTGKT.

It depends on a divalent metal cation as a cofactor.

It carries out the reaction a 5'-end dephospho-2'-deoxyribonucleoside-DNA + ATP = a 5'-end 5'-phospho-2'-deoxyribonucleoside-DNA + ADP + H(+). The enzyme catalyses a 5'-end dephospho-ribonucleoside-RNA + ATP = a 5'-end 5'-phospho-ribonucleoside-RNA + ADP + H(+). Its activity is regulated as follows. DNA kinase activity is inhibited by 250 mM sodium chloride whereas RNA kinase activity is unaffected. In terms of biological role, polynucleotide kinase that can phosphorylate the 5'-hydroxyl groups of both single-stranded RNA (ssRNA) and single-stranded DNA (ssDNA). Exhibits a strong preference for ssRNA. In Pyrococcus horikoshii (strain ATCC 700860 / DSM 12428 / JCM 9974 / NBRC 100139 / OT-3), this protein is Polyribonucleotide 5'-hydroxyl-kinase PH0197.